Reading from the N-terminus, the 158-residue chain is uncharacterized protein (158 aa).

Residues 1–26 (MRASRSPPSPRRCHHHHEATGAASGA) form a disordered region.

This is an uncharacterized protein from Homo sapiens (Human).